We begin with the raw amino-acid sequence, 122 residues long: Large ribosomal subunit protein bL17 (122 aa).

It belongs to the bacterial ribosomal protein bL17 family. Part of the 50S ribosomal subunit. Contacts protein L32.

This chain is Large ribosomal subunit protein bL17, found in Nautilia profundicola (strain ATCC BAA-1463 / DSM 18972 / AmH).